Consider the following 963-residue polypeptide: MAVFPWHSRNRNYKAEFASCRLEAVPLEFGDYHPLKPITVTESKTKKVNRKGSTSSTSSSSSSSVVDPLSSVLDGTDPLSMFAATADPAALAAAMDSSRRKRDRDDNSVVGSDFEPWTNKRGEILARYTTTEKLSINLFMGSEKGKAGTATLAMSEKVRTRLEELDDFEEGSQKELLNLTQQDYVNRIEELNQSLKDAWASDQKVKALKIVIQCSKLLSDTSVIQFYPSKFVLITDILDTFGKLVYERIFSMCVDSRSVLPDHFSPENANDTAKETCLNWFFKIASIRELIPRFYVEASILKCNKFLSKTGISECLPRLTCMIRGIGDPLVSVYARAYLCRVGMEVAPHLKETLNKNFFDFLLTFKQIHGDTVQNQLVVQGVELPSYLPLYPPAMDWIFQCISYHAPEALLTEMMERCKKLGNNALLLNSVMSAFRAEFIATRSMDFIGMIKECDESGFPKHLLFRSLGLNLALADPPESDRLQILNEAWKVITKLKNPQDYINCAEVWVEYTCKHFTKREVNTVLADVIKHMTPDRAFEDSYPQLQLIIKKVIAHFHDFSVLFSVEKFLPFLDMFQKESVRVEVCKCIMDAFIKHQQEPTKDPVILNALLHVCKTMHDSVNALTLEDEKRMLSYLINGFIKMVSFGRDFEQQLSFYVESRSMFCNLEPVLVQLIHSVNRLAMETRKVMKGNHSRKTAAFVRACVAYCFITIPSLAGIFTRLNLYLHSGQVALANQCLSQADAFFKAAISLVPEVPKMINIDGKMRPSESFLLEFLCNFFSTLLIVPDHPEHGVLFLVRELLNVIQDYTWEDNSDEKIRIYTCVLHLLSAMSQETYLYHIDKVDSNDSLYGGDSKFLAENNKLCETVMAQILEHLKTLAKDEALKRQSSLGLSFFNSILAHGDLRNNKLNQLSVNLWHLAQRHGCADTRTMVKTLEYIKKQSKQPDMTHLTELALRLPLQTRT.

The tract at residues serine 43–leucine 69 is disordered. Residues serine 53–leucine 69 show a composition bias toward low complexity. Serine 265 is subject to Phosphoserine. A helical membrane pass occupies residues alanine 703–phenylalanine 719.

Belongs to the VPS35L family. Component of the heterotrimeric retriever complex formed by VPS26C, VPS29 and VPS35L. Interacts with VPS29. Interacts with COMMD1, CCDC93 and CCDC22; associates with the CCC (COMMD/CCDC22/CCDC93) complex which contains at least COMMD1 (and possibly other COMM domain-containing proteins), CCDC22 and CCDC93. Interacts with WASHC1, WASHC2A and WASHC2C. Interacts with SNX17 and SNX31.

The protein localises to the membrane. It is found in the endosome. Functionally, acts as a component of the retriever complex. The retriever complex is a heterotrimeric complex related to retromer cargo-selective complex (CSC) and essential for retromer-independent retrieval and recycling of numerous cargos such as integrin alpha-5/beta-1 (ITGA5:ITGB1). The recruitment of the retriever complex to the endosomal membrane involves CCC and WASH complexes. In the endosomes, drives the retrieval and recycling of NxxY-motif-containing cargo proteins by coupling to SNX17, a cargo essential for the homeostatic maintenance of numerous cell surface proteins associated with processes that include cell migration, cell adhesion, nutrient supply and cell signaling. Involved in copper-dependent ATP7A trafficking between the trans-Golgi network and vesicles in the cell periphery; the function is proposed to depend on its association with the CCC complex and cooperation with the WASH complex on early endosomes. Seems not to be required for CCC complex stability. (Microbial infection) The heterotrimeric retriever complex, in collaboration with the CCC complex, mediates the exit of human papillomavirus to the cell surface. This chain is VPS35 endosomal protein-sorting factor-like, found in Homo sapiens (Human).